We begin with the raw amino-acid sequence, 262 residues long: MARGPKKHLKRLNAPKSWMLGKLGGVYAPRPSTGPHKLRECLPLLIFLRNRLKYALTNCEVTKITMQRLIKVDGKVRTDSNYPLGFMDVVTIEKTGEFFRLIYDVKGRFSIHRISNEEAKYKLCKVRRVQTGPKGVPFLVTHDGRTLRYPDPVIKVNDTIQLEIATNKILDSIKFDSGNLCMITGGRNLGRVGTVVSRERHPGSFDICHIKDSQGHTFATRMNNVFIIGKGSKAYVSLPRGKGVKLSIAEERDKRLAAKGAN.

The S4 RNA-binding domain maps to 42–104; the sequence is LPLLIFLRNR…TGEFFRLIYD (63 aa).

Belongs to the eukaryotic ribosomal protein eS4 family.

The chain is Small ribosomal subunit protein eS4 (RpS4) from Lysiphlebus testaceipes (Greenbugs aphid parastoid).